Reading from the N-terminus, the 775-residue chain is N6-adenosine-methyltransferase non-catalytic subunit MTB (775 aa).

The segment covering 1–10 (MKKKQEESSL) has biased composition (basic and acidic residues). 2 disordered regions span residues 1 to 424 (MKKK…GAIP) and 520 to 569 (DRGG…EQND). The segment covering 40–49 (FESSSRSGGS) has biased composition (low complexity). 5 stretches are compositionally biased toward basic and acidic residues: residues 50–79 (KSKEDNKSVVDVEHQDRDSKRERDGRERTH), 100–117 (DGDHKSSKLSDSRHDSGG), 125–222 (EHGE…LKDN), 229–278 (SSGD…RGEA), and 333–344 (EWAHNQEGRQRS). A compositionally biased stretch (polar residues) spans 375–400 (QRGSTPGRTNFVQTPNRGYQTPQGTR).

It belongs to the MT-A70-like family. In terms of assembly, forms homodimers. Interacts with HAKAI, MTA and VIR. Associates with MTA, FIP37, VIR and HAKAI to form the m6A writer complex which is essential for adenosine methylation at specific mRNA sequences.

It is found in the nucleus speckle. Its subcellular location is the nucleus. The protein resides in the nucleoplasm. Probable non-catalytic subunit of the N6-methyltransferase complex, a multiprotein complex that mediates N6-methyladenosine (m6A) methylation at the 5'-[AG]GAC-3' consensus sites of some mRNAs. Associates with MTA, FIP37, VIR and HAKAI to form the m6A writer complex which is essential for adenosine methylation at specific mRNA sequences. N6-methyladenosine (m6A) plays a role in mRNA stability, processing, translation efficiency and editing. In Arabidopsis thaliana (Mouse-ear cress), this protein is N6-adenosine-methyltransferase non-catalytic subunit MTB.